A 100-amino-acid polypeptide reads, in one-letter code: Urease subunit gamma (100 aa).

This sequence belongs to the urease gamma subunit family. As to quaternary structure, heterotrimer of UreA (gamma), UreB (beta) and UreC (alpha) subunits. Three heterotrimers associate to form the active enzyme.

It is found in the cytoplasm. The catalysed reaction is urea + 2 H2O + H(+) = hydrogencarbonate + 2 NH4(+). The protein operates within nitrogen metabolism; urea degradation; CO(2) and NH(3) from urea (urease route): step 1/1. The sequence is that of Urease subunit gamma from Escherichia coli.